Consider the following 686-residue polypeptide: ATP-dependent DNA helicase RecG (686 aa).

The wedge domain stretch occupies residues 50–149 (TVIDLNQAED…GTQTQENADV (100 aa)). Positions 279 to 439 (DLKAPIRMHR…VFGEMDVSSI (161 aa)) constitute a Helicase ATP-binding domain. ATP is bound at residue 292-299 (GDVGSGKT). The DEAH box motif lies at 392 to 395 (DEQH). Positions 462 to 618 (VLMQMTSELK…GFELSERDLE (157 aa)) constitute a Helicase C-terminal domain.

Belongs to the helicase family. RecG subfamily. In terms of assembly, monomer.

It carries out the reaction Couples ATP hydrolysis with the unwinding of duplex DNA by translocating in the 3'-5' direction.. The catalysed reaction is ATP + H2O = ADP + phosphate + H(+). Functionally, plays a critical role in recombination and DNA repair. Helps process Holliday junction intermediates to mature products by catalyzing branch migration. Has replication fork regression activity, unwinds stalled or blocked replication forks to make a HJ that can be resolved. Has a DNA unwinding activity characteristic of a DNA helicase with 3'-5' polarity. The sequence is that of ATP-dependent DNA helicase RecG from Staphylococcus aureus (strain NCTC 8325 / PS 47).